A 241-amino-acid polypeptide reads, in one-letter code: Tetrahydromethanopterin S-methyltransferase subunit A (241 aa).

The Cytoplasmic segment spans residues 1–220; it reads MANKREPAPG…AKWQAGYYNG (220 aa). H85 lines the 5-hydroxybenzimidazolylcob(I)amide pocket. The helical transmembrane segment at 221–241 threads the bilayer; that stretch reads KIQGIATGLFLMLLIMGILMF.

This sequence belongs to the MtrA family. In terms of assembly, the complex is composed of 8 subunits; MtrA, MtrB, MtrC, MtrD, MtrE, MtrF, MtrG and MtrH. The cofactor is 5-hydroxybenzimidazolylcob(I)amide.

The protein localises to the cell membrane. It carries out the reaction 5-methyl-5,6,7,8-tetrahydromethanopterin + coenzyme M + 2 Na(+)(in) = 5,6,7,8-tetrahydromethanopterin + methyl-coenzyme M + 2 Na(+)(out). The protein operates within one-carbon metabolism; methanogenesis from CO(2); methyl-coenzyme M from 5,10-methylene-5,6,7,8-tetrahydromethanopterin: step 2/2. In terms of biological role, part of a complex that catalyzes the formation of methyl-coenzyme M and tetrahydromethanopterin from coenzyme M and methyl-tetrahydromethanopterin. This is an energy-conserving, sodium-ion translocating step. In Methanocaldococcus jannaschii (strain ATCC 43067 / DSM 2661 / JAL-1 / JCM 10045 / NBRC 100440) (Methanococcus jannaschii), this protein is Tetrahydromethanopterin S-methyltransferase subunit A.